The following is a 368-amino-acid chain: Quinolinate synthase (368 aa).

His46 and Ser63 together coordinate iminosuccinate. Cys110 serves as a coordination point for [4Fe-4S] cluster. Residues 141–143 (YVN) and Ser162 each bind iminosuccinate. Residue Cys230 participates in [4Fe-4S] cluster binding. Iminosuccinate contacts are provided by residues 256-258 (HPE) and Thr273. Residue Cys320 participates in [4Fe-4S] cluster binding.

The protein belongs to the quinolinate synthase family. Type 3 subfamily. In terms of assembly, homotrimer. It depends on [4Fe-4S] cluster as a cofactor.

Its subcellular location is the cytoplasm. The catalysed reaction is iminosuccinate + dihydroxyacetone phosphate = quinolinate + phosphate + 2 H2O + H(+). It participates in cofactor biosynthesis; NAD(+) biosynthesis; quinolinate from iminoaspartate: step 1/1. Its function is as follows. Catalyzes the condensation of iminoaspartate with dihydroxyacetone phosphate to form quinolinate. The sequence is that of Quinolinate synthase from Bacillus subtilis (strain 168).